The chain runs to 180 residues: MSSTIASRRYAKALLDVAEEGGYVDQMVNDLDAVREVVAESRDLLTMLRSPVVNGDLKARILKEVFNGAVSGKTMLFFELLCRKKRAGLLADVIEEFSALRDERGGVVNVDVTSAVKLNDEQSRKLINGLSVYTGKKVRARLSLDEHLIGGVKVQIGDTILDNTVVHQLERLKHALGEEA.

The protein belongs to the ATPase delta chain family. F-type ATPases have 2 components, F(1) - the catalytic core - and F(0) - the membrane proton channel. F(1) has five subunits: alpha(3), beta(3), gamma(1), delta(1), epsilon(1). F(0) has three main subunits: a(1), b(2) and c(10-14). The alpha and beta chains form an alternating ring which encloses part of the gamma chain. F(1) is attached to F(0) by a central stalk formed by the gamma and epsilon chains, while a peripheral stalk is formed by the delta and b chains.

The protein localises to the cell inner membrane. In terms of biological role, f(1)F(0) ATP synthase produces ATP from ADP in the presence of a proton or sodium gradient. F-type ATPases consist of two structural domains, F(1) containing the extramembraneous catalytic core and F(0) containing the membrane proton channel, linked together by a central stalk and a peripheral stalk. During catalysis, ATP synthesis in the catalytic domain of F(1) is coupled via a rotary mechanism of the central stalk subunits to proton translocation. Functionally, this protein is part of the stalk that links CF(0) to CF(1). It either transmits conformational changes from CF(0) to CF(1) or is implicated in proton conduction. The chain is ATP synthase subunit delta from Chlorobium phaeobacteroides (strain BS1).